The chain runs to 265 residues: Zinc import ATP-binding protein ZnuC (265 aa).

Positions Ile6 to Asn221 constitute an ABC transporter domain. Gly38 to Thr45 contacts ATP. The tract at residues Asp245 to Gly265 is disordered.

The protein belongs to the ABC transporter superfamily. Zinc importer (TC 3.A.1.15.5) family. The complex is composed of two ATP-binding proteins (ZnuC), two transmembrane proteins (ZnuB) and a solute-binding protein (ZnuA).

Its subcellular location is the cell inner membrane. The enzyme catalyses Zn(2+)(out) + ATP(in) + H2O(in) = Zn(2+)(in) + ADP(in) + phosphate(in) + H(+)(in). Its function is as follows. Part of the ABC transporter complex ZnuABC involved in zinc import. Responsible for energy coupling to the transport system. This Pseudomonas savastanoi pv. phaseolicola (strain 1448A / Race 6) (Pseudomonas syringae pv. phaseolicola (strain 1448A / Race 6)) protein is Zinc import ATP-binding protein ZnuC.